A 274-amino-acid chain; its full sequence is Putative pyruvate, phosphate dikinase regulatory protein 1 (274 aa).

An ADP-binding site is contributed by 149-156 (GISRTSKT).

Belongs to the pyruvate, phosphate/water dikinase regulatory protein family. PDRP subfamily.

The catalysed reaction is N(tele)-phospho-L-histidyl/L-threonyl-[pyruvate, phosphate dikinase] + ADP = N(tele)-phospho-L-histidyl/O-phospho-L-threonyl-[pyruvate, phosphate dikinase] + AMP + H(+). The enzyme catalyses N(tele)-phospho-L-histidyl/O-phospho-L-threonyl-[pyruvate, phosphate dikinase] + phosphate + H(+) = N(tele)-phospho-L-histidyl/L-threonyl-[pyruvate, phosphate dikinase] + diphosphate. Its function is as follows. Bifunctional serine/threonine kinase and phosphorylase involved in the regulation of the pyruvate, phosphate dikinase (PPDK) by catalyzing its phosphorylation/dephosphorylation. The chain is Putative pyruvate, phosphate dikinase regulatory protein 1 from Listeria welshimeri serovar 6b (strain ATCC 35897 / DSM 20650 / CCUG 15529 / CIP 8149 / NCTC 11857 / SLCC 5334 / V8).